The following is a 133-amino-acid chain: Type VI secretion amidase effector 2 protein (133 aa).

Residues Cys23 and His73 contribute to the active site.

It belongs to the cell wall amidase Dae2/Tae2-like family.

The protein resides in the host periplasm. The protein localises to the secreted. It functions in the pathway cell wall degradation; peptidoglycan degradation. Toxic component of a contact-dependent interbacterial competition system (also called effector-immunity systems). Secreted by the SPI-6 type VI secretion system, probably into the periplasm of bacterial target cells. A cell wall amidase with specificity toward the D-meso-DAP-D-alanine bond (D-meso-diaminopimelic-D-alanine) found in peptidoglycan of Gram-negative bacteria. Toxicity is counteracted by a cognate immunity protein Tai2 (t2585), but not immunity proteins associated with a similar endopeptidase in other bacteria. In vitro degrades peptidoglycans from Gram-negative but not Gram-positive bacteria. In Salmonella typhi, this protein is Type VI secretion amidase effector 2 protein.